The chain runs to 352 residues: 4-hydroxy-3-methylbut-2-enyl diphosphate reductase (352 aa).

Cysteine 36 is a binding site for [4Fe-4S] cluster. (2E)-4-hydroxy-3-methylbut-2-enyl diphosphate-binding residues include histidine 76 and histidine 114. Positions 76 and 114 each coordinate dimethylallyl diphosphate. Isopentenyl diphosphate contacts are provided by histidine 76 and histidine 114. Cysteine 136 serves as a coordination point for [4Fe-4S] cluster. Histidine 164 is a binding site for (2E)-4-hydroxy-3-methylbut-2-enyl diphosphate. Histidine 164 provides a ligand contact to dimethylallyl diphosphate. Residue histidine 164 coordinates isopentenyl diphosphate. The Proton donor role is filled by glutamate 166. A (2E)-4-hydroxy-3-methylbut-2-enyl diphosphate-binding site is contributed by threonine 204. Cysteine 234 is a [4Fe-4S] cluster binding site. Positions 262, 263, 264, and 309 each coordinate (2E)-4-hydroxy-3-methylbut-2-enyl diphosphate. 4 residues coordinate dimethylallyl diphosphate: serine 262, serine 263, asparagine 264, and serine 309. Isopentenyl diphosphate-binding residues include serine 262, serine 263, asparagine 264, and serine 309.

It belongs to the IspH family. It depends on [4Fe-4S] cluster as a cofactor.

The catalysed reaction is isopentenyl diphosphate + 2 oxidized [2Fe-2S]-[ferredoxin] + H2O = (2E)-4-hydroxy-3-methylbut-2-enyl diphosphate + 2 reduced [2Fe-2S]-[ferredoxin] + 2 H(+). It carries out the reaction dimethylallyl diphosphate + 2 oxidized [2Fe-2S]-[ferredoxin] + H2O = (2E)-4-hydroxy-3-methylbut-2-enyl diphosphate + 2 reduced [2Fe-2S]-[ferredoxin] + 2 H(+). It functions in the pathway isoprenoid biosynthesis; dimethylallyl diphosphate biosynthesis; dimethylallyl diphosphate from (2E)-4-hydroxy-3-methylbutenyl diphosphate: step 1/1. Its pathway is isoprenoid biosynthesis; isopentenyl diphosphate biosynthesis via DXP pathway; isopentenyl diphosphate from 1-deoxy-D-xylulose 5-phosphate: step 6/6. Catalyzes the conversion of 1-hydroxy-2-methyl-2-(E)-butenyl 4-diphosphate (HMBPP) into a mixture of isopentenyl diphosphate (IPP) and dimethylallyl diphosphate (DMAPP). Acts in the terminal step of the DOXP/MEP pathway for isoprenoid precursor biosynthesis. This is 4-hydroxy-3-methylbut-2-enyl diphosphate reductase from Bifidobacterium longum (strain NCC 2705).